The sequence spans 275 residues: Transcription factor Ovo-like 2 (275 aa).

A disordered region spans residues 15 to 101 (SVRSWDELPD…GHLATKQRPV (87 aa)). Composition is skewed to basic and acidic residues over residues 18-29 (SWDELPDEKRAD) and 39-49 (LLHDPPEDCRS). The span at 56 to 76 (GSGSSSAGEPGGAESSSSPHA) shows a compositional bias: low complexity. Residues 80 to 89 (ETPEPGDAEG) are compositionally biased toward acidic residues. C2H2-type zinc fingers lie at residues 119 to 141 (HSCD…LKCH), 147 to 169 (HLCT…VRTH), 175 to 198 (YKCN…KKIH), and 214 to 237 (YVCE…NSAH). Phosphoserine is present on serine 269.

Belongs to the krueppel C2H2-type zinc-finger protein family. Interacts (via zinc-finger domains) with CEBPA (via bZIP domain); the interaction inhibits the transcription factor activity of CEBPA and is required to repress adipogenesis. In terms of tissue distribution, expressed in testis, ovary, heart and skeletal muscle. Expressed in the cornea, but absent from the corneal endothelium.

The protein resides in the nucleus. In terms of biological role, zinc-finger transcription repressor factor. Plays a critical role in maintaining the identity of epithelial lineages by suppressing epithelial-to mesenchymal transition (EMT) mainly through the repression of ZEB1, an EMT inducer. Positively regulates neuronal differentiation. Suppresses cell cycling and terminal differentiation of keratinocytes by directly repressing MYC and NOTCH1. Important for the correct development of primordial germ cells in embryos. Plays dual functions in thermogenesis and adipogenesis to maintain energy balance. Essential for brown/beige adipose tissue-mediated thermogenesis, is necessary for the development of brown adipocytes. In white adipose tissues, limits adipogenesis by blocking CEBPA binding to its transcriptional targets and inhibiting its transcription factor activity. In Homo sapiens (Human), this protein is Transcription factor Ovo-like 2.